The sequence spans 363 residues: Transcription factor IIIA (363 aa).

9 consecutive C2H2-type zinc fingers follow at residues 38–62, 68–92, 98–123, 130–154, 160–184, 187–211, 215–237, 244–269, and 275–299; these read FICSFPDCSASYNKAWKLDAHLCKH, FVCDYEGCGKAFIRDYHLSRHILIH, FVCADNGCNQKFSTKSNLKKHIERKH, YVCNFEGCKKAFKKHQQLRTHQCQH, FRCTHEGCGKHFASPSRLKRHGKVH, YLCQKGCSFVGKTWTELLKHTREAH, VTCTVCQKMFKRKDHLKQHMKTH, YRCPREGCARTYTTVFNLQSHILSFH, and FVCEHAGCGKTFAMKQSLMRHSVVH. Residues 301–363 form a disordered region; the sequence is PDKKRMKLKV…LAPAALLTVH (63 aa). Positions 338-350 are enriched in low complexity; the sequence is SLPNSTESSSSPE.

The protein localises to the nucleus. Involved in ribosomal large subunit biogenesis. Binds the approximately 50 base pairs internal control region (ICR) of 5S ribosomal RNA genes. It is required for their RNA polymerase III-dependent transcription and may also maintain the transcription of other genes. Also binds the transcribed 5S RNA's. The sequence is that of Transcription factor IIIA (Gtf3a) from Rattus norvegicus (Rat).